The sequence spans 359 residues: 3-dehydroquinate synthase (359 aa).

Residues 71–76 (DGEQYK), 105–109 (GVIGD), 129–130 (TT), K142, K151, and 169–172 (CLKT) contribute to the NAD(+) site. E184, H247, and H264 together coordinate Zn(2+).

It belongs to the sugar phosphate cyclases superfamily. Dehydroquinate synthase family. It depends on Co(2+) as a cofactor. The cofactor is Zn(2+). Requires NAD(+) as cofactor.

It is found in the cytoplasm. The catalysed reaction is 7-phospho-2-dehydro-3-deoxy-D-arabino-heptonate = 3-dehydroquinate + phosphate. The protein operates within metabolic intermediate biosynthesis; chorismate biosynthesis; chorismate from D-erythrose 4-phosphate and phosphoenolpyruvate: step 2/7. In terms of biological role, catalyzes the conversion of 3-deoxy-D-arabino-heptulosonate 7-phosphate (DAHP) to dehydroquinate (DHQ). The protein is 3-dehydroquinate synthase of Shewanella amazonensis (strain ATCC BAA-1098 / SB2B).